The following is a 397-amino-acid chain: MLNNKRLFTSESVTEGHPDKIADQVSDAILDAILKDDPNARVACETTVTTGMALIAGEISTTTYVDIPKVVRETIKEIGYTRAKYGYDYETMAILTAIDEQSPDIAQGVDKALEYRDKDSEEEIEATGAGDQGLMFGYATNETETYMPLAIYLSHQLAKRLSDVRKDGTLNYLRPDGKVQVTVEYDENDNPVRIDTIVVSTQHAEDVTLEQIQEDIKAHVIYPTVPENLINEQTKFYINPTGRFVIGGPQGDAGLTGRKIIVDTYGGIARHGGGCFSGKDPTKVDRSAAYAARYVAKNIVAAGLADQCEVQLAYAIGVAEPVSIAIDTFGTGKVSEGQLVEAVRKHFDLRPAGIIKMLDLKQPIYKQTAAYGHFGRTDVLFPWEKLDKVEELKDAVK.

An ATP-binding site is contributed by histidine 17. A Mg(2+)-binding site is contributed by aspartate 19. Glutamate 45 is a K(+) binding site. L-methionine-binding residues include glutamate 58 and glutamine 101. A flexible loop region spans residues 101-111 (QSPDIAQGVDK). Residues 176 to 178 (DGK), 243 to 244 (RF), aspartate 252, 258 to 259 (RK), and lysine 279 contribute to the ATP site. Aspartate 252 provides a ligand contact to L-methionine. L-methionine is bound at residue lysine 283.

Belongs to the AdoMet synthase family. Homotetramer; dimer of dimers. The cofactor is Mg(2+). Requires K(+) as cofactor.

Its subcellular location is the cytoplasm. It catalyses the reaction L-methionine + ATP + H2O = S-adenosyl-L-methionine + phosphate + diphosphate. It functions in the pathway amino-acid biosynthesis; S-adenosyl-L-methionine biosynthesis; S-adenosyl-L-methionine from L-methionine: step 1/1. Catalyzes the formation of S-adenosylmethionine (AdoMet) from methionine and ATP. The overall synthetic reaction is composed of two sequential steps, AdoMet formation and the subsequent tripolyphosphate hydrolysis which occurs prior to release of AdoMet from the enzyme. The polypeptide is S-adenosylmethionine synthase (Staphylococcus aureus).